Here is an 804-residue protein sequence, read N- to C-terminus: Leucine--tRNA ligase (804 aa).

The short motif at 40-51 (PYPSGAGLHVGH) is the 'HIGH' region element. The 'KMSKS' region motif lies at 576–580 (KMSKS). K579 contributes to the ATP binding site.

Belongs to the class-I aminoacyl-tRNA synthetase family.

The protein resides in the cytoplasm. The enzyme catalyses tRNA(Leu) + L-leucine + ATP = L-leucyl-tRNA(Leu) + AMP + diphosphate. The protein is Leucine--tRNA ligase of Bacillus pumilus (strain SAFR-032).